Here is an 863-residue protein sequence, read N- to C-terminus: Bifunctional uridylyltransferase/uridylyl-removing enzyme (863 aa).

Residues 1–328 (MLFPLSLSSP…SSNQATVIEQ (328 aa)) form a uridylyltransferase region. Residues 329–687 (LDDDFQLINQ…ISNRFSLGGT (359 aa)) are uridylyl-removing. The region spanning 446–568 (VDEHTLRVML…VQNQVRLDYL (123 aa)) is the HD domain. 2 ACT domains span residues 688–772 (EVFI…PNRQ) and 794–863 (EMEL…RNIG).

Belongs to the GlnD family. Mg(2+) is required as a cofactor.

The enzyme catalyses [protein-PII]-L-tyrosine + UTP = [protein-PII]-uridylyl-L-tyrosine + diphosphate. The catalysed reaction is [protein-PII]-uridylyl-L-tyrosine + H2O = [protein-PII]-L-tyrosine + UMP + H(+). Uridylyltransferase (UTase) activity is inhibited by glutamine, while glutamine activates uridylyl-removing (UR) activity. In terms of biological role, modifies, by uridylylation and deuridylylation, the PII regulatory proteins (GlnB and homologs), in response to the nitrogen status of the cell that GlnD senses through the glutamine level. Under low glutamine levels, catalyzes the conversion of the PII proteins and UTP to PII-UMP and PPi, while under higher glutamine levels, GlnD hydrolyzes PII-UMP to PII and UMP (deuridylylation). Thus, controls uridylylation state and activity of the PII proteins, and plays an important role in the regulation of nitrogen assimilation and metabolism. This is Bifunctional uridylyltransferase/uridylyl-removing enzyme from Haemophilus influenzae (strain PittEE).